A 104-amino-acid chain; its full sequence is Large ribosomal subunit protein uL24 (104 aa).

It belongs to the universal ribosomal protein uL24 family. In terms of assembly, part of the 50S ribosomal subunit.

Functionally, one of two assembly initiator proteins, it binds directly to the 5'-end of the 23S rRNA, where it nucleates assembly of the 50S subunit. One of the proteins that surrounds the polypeptide exit tunnel on the outside of the subunit. The protein is Large ribosomal subunit protein uL24 of Shewanella oneidensis (strain ATCC 700550 / JCM 31522 / CIP 106686 / LMG 19005 / NCIMB 14063 / MR-1).